Consider the following 203-residue polypeptide: Phosphatidylethanolamine N-methyltransferase (203 aa).

The enzyme catalyses a 1,2-diacyl-sn-glycero-3-phosphoethanolamine + S-adenosyl-L-methionine = a 1,2-diacyl-sn-glycero-3-phospho-N-methylethanolamine + S-adenosyl-L-homocysteine + H(+). The protein operates within phospholipid metabolism; phosphatidylcholine biosynthesis. This enzyme catalyzes three distinct methylation reactions for converting phosphatidylethanolamine to phosphatidylcholine. This Cereibacter sphaeroides (Rhodobacter sphaeroides) protein is Phosphatidylethanolamine N-methyltransferase (pmtA).